Reading from the N-terminus, the 99-residue chain is Protein NCBP2AS2 (99 aa).

Residues 76 to 99 (ELRRGLRGRSGPPPGSQRGPGANI) form a disordered region.

This is Protein NCBP2AS2 from Homo sapiens (Human).